Consider the following 154-residue polypeptide: Transcriptional repressor NrdR (154 aa).

A zinc finger lies at 3 to 34 (CPFCRHPDSRVVDSRETDEGQAIRRRRSCPEC). Residues 46-136 (LAVVKRSGVT…VYRSFESAAD (91 aa)) form the ATP-cone domain.

It belongs to the NrdR family. Zn(2+) is required as a cofactor.

In terms of biological role, negatively regulates transcription of bacterial ribonucleotide reductase nrd genes and operons by binding to NrdR-boxes. This chain is Transcriptional repressor NrdR, found in Mycobacterium sp. (strain JLS).